A 379-amino-acid chain; its full sequence is Retinoic acid receptor RXR-alpha-B (379 aa).

Residues 1 to 22 are compositionally biased toward polar residues; it reads MPVPEQKQTVQLSSPMNAVSSS. The disordered stretch occupies residues 1–24; it reads MPVPEQKQTVQLSSPMNAVSSSED. Residues 1 to 53 are modulating; it reads MPVPEQKQTVQLSSPMNAVSSSEDIKPPLGLNGVMKVPAHRIGTLSLSLTKHI. A DNA-binding region (nuclear receptor) is located at residues 51-126; sequence KHICAICGDR…MGMKREAVQE (76 aa). Zn(2+) contacts are provided by cysteine 54, cysteine 57, cysteine 71, and cysteine 74. An NR C4-type zinc finger spans residues 54–74; it reads CAICGDRSSGKHYGVYSCEGC. Positions 79–84 are nuclear localization signal; the sequence is KRTVRK. Zn(2+)-binding residues include cysteine 90, cysteine 96, cysteine 106, and cysteine 109. An NR C4-type zinc finger spans residues 90–109; sequence CRDNKDCMIDKRQRNRCQYC. The segment at 120-141 is hinge; sequence KREAVQEERQRAKERSEAEFGG. Residues 144–375 enclose the NR LBD domain; that stretch reads NEDMPVEKIL…TFLMEMLEAP (232 aa). 9-cis-retinoate contacts are provided by arginine 233 and alanine 244. All-trans-retinoate contacts are provided by arginine 233 and alanine 244. The required for nuclear export stretch occupies residues 265 to 285; that stretch reads RVLTELVSKMRDMQMDKTELG. Positions 364–375 are AF-2; it reads IDTFLMEMLEAP.

The protein belongs to the nuclear hormone receptor family. NR2 subfamily. Homodimer. Heterodimer; with a rar molecule. Binds DNA preferentially as a rar/rxr heterodimer. Uniform expression from the blastula to mid-gastrula stages. At 12 hours post-fertilization (hpf), expressed strongly in the tail and weakly elsewhere. At 24 hpf, weak expression in the forebrain, eyes and pharyngeal endoderm and continued expression in the tail mesoderm. At 48 hpf, anterior expression limited to ventral cells underlying the head, medial expression in the pectoral fin bud mesoderm and continued tail expression.

Its subcellular location is the nucleus. Its function is as follows. Receptor for retinoic acid that acts as a transcription factor. Forms homo- or heterodimers with retinoic acid receptors (rars) and binds to target response elements in response to their ligands, all-trans or 9-cis retinoic acid, to regulate gene expression in various biological processes. The rar/rxr heterodimers bind to the retinoic acid response elements (RARE) composed of tandem 5'-AGGTCA-3' sites known as DR1-DR5 to regulate transcription. The high affinity ligand for rxrs is 9-cis retinoic acid. In the absence of ligand, the rar/rxr heterodimers associate with a multiprotein complex containing transcription corepressors that induce histone deacetylation, chromatin condensation and transcriptional suppression. On ligand binding, the corepressors dissociate from the receptors and coactivators are recruited leading to transcriptional activation. The protein is Retinoic acid receptor RXR-alpha-B (rxrab) of Danio rerio (Zebrafish).